A 170-amino-acid polypeptide reads, in one-letter code: MKRFSTAYLLLGILCSAAVFLIGAPSRALGAEVEHYEPLQVHVQLEKVYLDGDVSIEHKHEKVFSMDDFWAAYAGWTLVEQKKGYVLFRKQMDDISPLSKVNGYIGVSDNGVISTFHGRPEPASEPIQSFFQIDLERLESHMQKNLLKGIPFRTKAEFEDVIEHMKTYSG.

Positions 1–30 are cleaved as a signal peptide; the sequence is MKRFSTAYLLLGILCSAAVFLIGAPSRALG.

As to quaternary structure, monomer.

The protein resides in the forespore intermembrane space. Functionally, inhibits the SpoIVB zymogen from undergoing autocatalytic activation by an unknown mechanism, and in this way plays a role in the sigma-K checkpoint of sporulation. This chain is Protein BofC (bofC), found in Bacillus subtilis (strain 168).